The sequence spans 106 residues: COX assembly mitochondrial protein homolog (106 aa).

Ala2 is modified (N-acetylalanine). The CHCH domain maps to Arg28–Pro71. 2 short sequence motifs (cx9C motif) span residues Cys31–Cys41 and Cys53–Cys63. Disulfide bonds link Cys31–Cys63 and Cys41–Cys53.

It belongs to the CMC family. As to quaternary structure, component of the MITRAC (mitochondrial translation regulation assembly intermediate of cytochrome c oxidase complex) complex, the core components of this complex being COA3/MITRAC12 and COX14.

Its subcellular location is the mitochondrion. In terms of biological role, component of the MITRAC (mitochondrial translation regulation assembly intermediate of cytochrome c oxidase complex) complex, that regulates cytochrome c oxidase assembly. The protein is COX assembly mitochondrial protein homolog (Cmc1) of Mus musculus (Mouse).